Consider the following 514-residue polypeptide: Histidine ammonia-lyase (514 aa).

Residues 144–146 (ASG) constitute a cross-link (5-imidazolinone (Ala-Gly)). The residue at position 145 (Ser-145) is a 2,3-didehydroalanine (Ser).

It belongs to the PAL/histidase family. Contains an active site 4-methylidene-imidazol-5-one (MIO), which is formed autocatalytically by cyclization and dehydration of residues Ala-Ser-Gly.

The protein localises to the cytoplasm. It catalyses the reaction L-histidine = trans-urocanate + NH4(+). Its pathway is amino-acid degradation; L-histidine degradation into L-glutamate; N-formimidoyl-L-glutamate from L-histidine: step 1/3. The polypeptide is Histidine ammonia-lyase (Rhodospirillum rubrum (strain ATCC 11170 / ATH 1.1.1 / DSM 467 / LMG 4362 / NCIMB 8255 / S1)).